A 356-amino-acid chain; its full sequence is RuBisCO accumulation factor 1 (356 aa).

Residues 7-185 are N-terminal alpha-helix; sequence ALTTEVLQRL…RQALEKLLTD (179 aa). The interval 209 to 342 is C-terminal beta-sheet; that stretch reads PYLVPVAGTA…LLLVLRPPQV (134 aa).

This sequence belongs to the RAF family. As to quaternary structure, homodimer. Forms an RbcL(8)-Raf1(8) complex. Forms complexes of many stoichiometries with RbcL with and without RbcS. RbcX and Raf1 can bind simultaneously to RbcL.

It localises to the cytoplasm. In terms of biological role, a major RuBisCO chaperone. Acts after GroEL-GroES chaperonin to fold and/or assemble the large subunit of RuBisCO (ccbL, rbcL). Cooperates with RbcX in RbcL folding, plays the major role in assembly of dimers into RbcL(8)-Raf1(8) intermediate complexes. RbcS replaces Raf1, leading to holoenzyme formation. Its function is as follows. Required for optimal reconstitution of RuBisCO upon expression of rbcL-rbcS subunits in E.coli. Only interacts with the large subunit (cbbL, rbcL). Probably acts in the final stages of RuBisCO assembly, possibly participating in the addition of the small subunit (ccbS, rbcS). The polypeptide is RuBisCO accumulation factor 1 (Thermosynechococcus vestitus (strain NIES-2133 / IAM M-273 / BP-1)).